The chain runs to 137 residues: ATP synthase epsilon chain, chloroplastic (137 aa).

This sequence belongs to the ATPase epsilon chain family. In terms of assembly, F-type ATPases have 2 components, CF(1) - the catalytic core - and CF(0) - the membrane proton channel. CF(1) has five subunits: alpha(3), beta(3), gamma(1), delta(1), epsilon(1). CF(0) has three main subunits: a, b and c.

It localises to the plastid. The protein resides in the chloroplast thylakoid membrane. Produces ATP from ADP in the presence of a proton gradient across the membrane. This chain is ATP synthase epsilon chain, chloroplastic, found in Medicago sativa (Alfalfa).